A 318-amino-acid polypeptide reads, in one-letter code: L-lactate dehydrogenase (318 aa).

NAD(+) is bound by residues Val18, Asp39, Lys44, Tyr69, and 83–84 (GA). Substrate-binding residues include Gln86 and Arg92. NAD(+) is bound by residues Ser105, 122 to 124 (VSN), and Ser147. Substrate is bound at residue 124–127 (NPVD). 152 to 155 (DTSR) is a binding site for substrate. His179 functions as the Proton acceptor in the catalytic mechanism. Tyr225 bears the Phosphotyrosine mark. Position 234 (Thr234) interacts with substrate.

It belongs to the LDH/MDH superfamily. LDH family. In terms of assembly, homotetramer.

The protein localises to the cytoplasm. It carries out the reaction (S)-lactate + NAD(+) = pyruvate + NADH + H(+). It participates in fermentation; pyruvate fermentation to lactate; (S)-lactate from pyruvate: step 1/1. In terms of biological role, catalyzes the conversion of lactate to pyruvate. The polypeptide is L-lactate dehydrogenase (Clostridium botulinum (strain 657 / Type Ba4)).